The primary structure comprises 397 residues: DnaJ protein homolog 1 (397 aa).

The J domain occupies 1–52; that stretch reads KNASPDDLKKAYRKAAIKNHPDKGGDPEKFKELAQAYDVLSDPEKREIYDQY. The segment at 114–198 adopts a CR-type zinc-finger fold; that stretch reads GTSKKLSLSR…CKGEKVVQEK (85 aa). CXXCXGXG motif repeat units follow at residues 127–134, 143–150, 170–177, and 186–193; these read CSKCNGKG, CASCQGSG, CNDCKGTG, and CPLCKGEK. The disordered stretch occupies residues 367 to 397; sequence MRRKQHQHAQEAYDEDDEGHGGGQRVQCAQQ. Cysteine methyl ester is present on Cys-394. The S-farnesyl cysteine moiety is linked to residue Cys-394. A propeptide spans 395-397 (removed in mature form); that stretch reads AQQ.

It is found in the membrane. In terms of biological role, plays a continuous role in plant development probably in the structural organization of compartments. In Allium porrum (Leek), this protein is DnaJ protein homolog 1 (DNAJ1).